We begin with the raw amino-acid sequence, 530 residues long: Developmental and secondary metabolism regulator VEL1 (530 aa).

In terms of domain architecture, Velvet spans 26-220; the sequence is NRSLWYQMTV…ADQGCQVRIR (195 aa). The short motif at 40–45 is the Nuclear localization signal element; sequence ERARAC. A disordered region spans residues 206 to 516; sequence LSKTVADQGC…HDQGWYSRAD (311 aa). Over residues 244–253 the composition is skewed to basic and acidic residues; that stretch reads FERREEDFGR. A compositionally biased stretch (pro residues) spans 295–305; the sequence is YPPPPPPPSYE. Polar residues predominate over residues 347–356; the sequence is YAPTAQSPYS. Residues 380 to 389 are compositionally biased toward basic and acidic residues; that stretch reads VKHDLYDRRQ. Positions 390–404 are enriched in low complexity; the sequence is STSSYVPPSPSVYST. The span at 415–426 shows a compositional bias: pro residues; it reads SYPPTPVAAPRP. Residues 429 to 460 form a PEST region; sequence MHSQTSLPALKIDQLVSPVSPLPPIEPQTGPA. Residues 478-490 are compositionally biased toward polar residues; the sequence is FAQSTRPLHNGQR.

Belongs to the velvet family. VeA subfamily. Component of the heterotrimeric velvet complex composed of LAE1, VEL1 and VEL2; VEL1 acting as a bridging protein between LAE1 and VEL2. Interacts with LAE1.

Its subcellular location is the nucleus. It is found in the cytoplasm. In terms of biological role, component of the velvet transcription factor complex that controls sexual/asexual developmental ratio in response to light, promoting sexual development in the darkness while stimulating asexual sporulation under illumination. The velvet complex hat acts as a global regulator for secondary metabolite gene expression. Controls positively the expression of the gibberellins, fumonisins and fusarin C gene clusters. Controls the expression of the fusaric acid gene cluster. Controls negatively the expression of the bikaverin gene cluster. Regulates the expression of laeA. Plays a crucial role in virulence. This Gibberella fujikuroi (strain CBS 195.34 / IMI 58289 / NRRL A-6831) (Bakanae and foot rot disease fungus) protein is Developmental and secondary metabolism regulator VEL1.